A 363-amino-acid chain; its full sequence is mRNA decay activator protein ZFP36L2-A (363 aa).

Residues 131–136 (RYKTEL) carry the RNA-binding motif. C3H1-type zinc fingers lie at residues 131–159 (RYKT…HGFH) and 169–197 (KYKT…HNAE). Residues 148–189 (YGEKCQFAHGFHELRSLTRHPKYKTELCRTFHTIGFCPYGPR) are RNA-binding. A disordered region spans residues 308–349 (ESPVFDAPPSPPDSLSDRDSYLSGSLSSGSLSGSDSPTLDSN). Low complexity predominate over residues 328–347 (YLSGSLSSGSLSGSDSPTLD).

Post-translationally, phosphorylated. In terms of tissue distribution, widely expressed in adults.

The protein localises to the nucleus. It localises to the cytoplasm. Functionally, zinc-finger RNA-binding protein that destabilizes several cytoplasmic AU-rich element (ARE)-containing mRNA transcripts by promoting their poly(A) tail removal or deadenylation, and hence provide a mechanism for attenuating protein synthesis. Acts as a 3'-untranslated region (UTR) ARE mRNA-binding adapter protein to communicate signaling events to the mRNA decay machinery. Functions by recruiting the CCR4-NOT deadenylase complex and probably other components of the cytoplasmic RNA decay machinery to the bound ARE-containing mRNAs, and hence promotes ARE-mediated mRNA deadenylation and decay processes. Binds to 3'-UTR ARE of numerous mRNAs. Also induces the degradation of ARE-containing mRNAs even in absence of poly(A) tail. Required for tubulogenesis during pronephros development. The protein is mRNA decay activator protein ZFP36L2-A (zfp36l2-A) of Xenopus laevis (African clawed frog).